A 335-amino-acid chain; its full sequence is MIEKIWFHRHPLGYLLWPLLWPFSVLFGVISRSRRKAYQTGDKPSYRAPLPVVVVGNITAGGNGKTPVVVWLVETLQNLGYRPGVVSRGYGAKAPSYPLVVNEQTPAQHCGDEPKLIFQRTKAPVAVDPVRSQAVKALLEHGVNVIVTDDGLQHYALQRDIEIAVVDGVRRFGNQELIPLGPLREPVSRLDEVDFIITNGGVAKANEIAMRLQPTDAVNLKTGERCAVSKLTRLCAMAGIGHPSRFFNTLRELNADLVHCQGFADHQAFDAAQLNQLAQQGDHLIMTEKDAVKCAEFAQPNWWYLPVSAQFAPEAEQRIVDKIKEVMEPYGSPSA.

ATP is bound at residue 59 to 66; the sequence is TAGGNGKT.

Belongs to the LpxK family.

It carries out the reaction a lipid A disaccharide + ATP = a lipid IVA + ADP + H(+). Its pathway is glycolipid biosynthesis; lipid IV(A) biosynthesis; lipid IV(A) from (3R)-3-hydroxytetradecanoyl-[acyl-carrier-protein] and UDP-N-acetyl-alpha-D-glucosamine: step 6/6. Its function is as follows. Transfers the gamma-phosphate of ATP to the 4'-position of a tetraacyldisaccharide 1-phosphate intermediate (termed DS-1-P) to form tetraacyldisaccharide 1,4'-bis-phosphate (lipid IVA). The chain is Tetraacyldisaccharide 4'-kinase from Vibrio cholerae serotype O1 (strain ATCC 39541 / Classical Ogawa 395 / O395).